A 651-amino-acid polypeptide reads, in one-letter code: Acetyl-coenzyme A synthetase (651 aa).

Residues 191-194 (RGGK), threonine 311, and asparagine 335 each bind CoA. ATP contacts are provided by residues 387-389 (GEP), 411-416 (DTWWQT), aspartate 500, and arginine 515. Position 523 (serine 523) interacts with CoA. Arginine 526 lines the ATP pocket. Mg(2+) contacts are provided by valine 537, histidine 539, and valine 542. A CoA-binding site is contributed by arginine 584. N6-acetyllysine is present on lysine 609.

It belongs to the ATP-dependent AMP-binding enzyme family. Requires Mg(2+) as cofactor. Acetylated. Deacetylation by the SIR2-homolog deacetylase activates the enzyme.

The catalysed reaction is acetate + ATP + CoA = acetyl-CoA + AMP + diphosphate. Functionally, catalyzes the conversion of acetate into acetyl-CoA (AcCoA), an essential intermediate at the junction of anabolic and catabolic pathways. AcsA undergoes a two-step reaction. In the first half reaction, AcsA combines acetate with ATP to form acetyl-adenylate (AcAMP) intermediate. In the second half reaction, it can then transfer the acetyl group from AcAMP to the sulfhydryl group of CoA, forming the product AcCoA. The protein is Acetyl-coenzyme A synthetase of Stutzerimonas stutzeri (strain A1501) (Pseudomonas stutzeri).